A 362-amino-acid polypeptide reads, in one-letter code: GMP reductase (362 aa).

Residues 26-27 (SR), Lys-78, 129-131 (DVA), and 180-181 (IG) contribute to the NADP(+) site. K(+) is bound by residues Gly-181, Gly-183, and Cys-186. The active-site Thioimidate intermediate is Cys-186. The active-site Proton donor/acceptor is the Thr-188. A K(+)-binding site is contributed by Arg-189. Residues 219–221 (DGG), 242–243 (GG), 268–270 (GMS), and 286–290 (RASEG) contribute to the GMP site. NADP(+)-binding positions include Met-269, 285-286 (YR), and 314-317 (STCT).

It belongs to the IMPDH/GMPR family.

It carries out the reaction IMP + NH4(+) + NADP(+) = GMP + NADPH + 2 H(+). Functionally, catalyzes the irreversible NADPH-dependent deamination of GMP to IMP. It functions in the conversion of nucleobase, nucleoside and nucleotide derivatives of G to A nucleotides, and in maintaining the intracellular balance of A and G nucleotides. This Phytophthora infestans (Potato late blight agent) protein is GMP reductase.